Reading from the N-terminus, the 277-residue chain is Sulfate transport system permease protein CysT (277 aa).

The next 7 membrane-spanning stretches (helical) occupy residues 17 to 37, 64 to 84, 99 to 119, 136 to 156, 185 to 205, 215 to 235, and 243 to 263; these read LGTS…ALVM, LLSA…MAWI, LMDL…ASLF, VTYT…PFVV, FCKV…ALSF, VIFI…MIFV, and PAAS…LFSI. The ABC transmembrane type-1 domain maps to 60–263; that stretch reads YKVTLLSAFV…AASLLLLFSI (204 aa).

The protein belongs to the binding-protein-dependent transport system permease family. CysTW subfamily. As to quaternary structure, the complex is composed of two ATP-binding proteins (CysA), two transmembrane proteins (CysT and CysW) and a solute-binding protein (CysP).

It is found in the cell inner membrane. Part of the ABC transporter complex CysAWTP (TC 3.A.1.6.1) involved in sulfate/thiosulfate import. Probably responsible for the translocation of the substrate across the membrane. This chain is Sulfate transport system permease protein CysT (cysU), found in Escherichia coli (strain K12).